The primary structure comprises 951 residues: Bifunctional glutamine synthetase adenylyltransferase/adenylyl-removing enzyme (951 aa).

The segment at 1 to 440 (MLPLPSELQI…VFDDLIGDET (440 aa)) is adenylyl removase. The adenylyl transferase stretch occupies residues 449-951 (HGLYKSLWQD…WLAANDANVS (503 aa)).

The protein belongs to the GlnE family. The cofactor is Mg(2+).

It catalyses the reaction [glutamine synthetase]-O(4)-(5'-adenylyl)-L-tyrosine + phosphate = [glutamine synthetase]-L-tyrosine + ADP. It carries out the reaction [glutamine synthetase]-L-tyrosine + ATP = [glutamine synthetase]-O(4)-(5'-adenylyl)-L-tyrosine + diphosphate. In terms of biological role, involved in the regulation of glutamine synthetase GlnA, a key enzyme in the process to assimilate ammonia. When cellular nitrogen levels are high, the C-terminal adenylyl transferase (AT) inactivates GlnA by covalent transfer of an adenylyl group from ATP to specific tyrosine residue of GlnA, thus reducing its activity. Conversely, when nitrogen levels are low, the N-terminal adenylyl removase (AR) activates GlnA by removing the adenylyl group by phosphorolysis, increasing its activity. The regulatory region of GlnE binds the signal transduction protein PII (GlnB) which indicates the nitrogen status of the cell. The chain is Bifunctional glutamine synthetase adenylyltransferase/adenylyl-removing enzyme from Yersinia pseudotuberculosis serotype O:1b (strain IP 31758).